Reading from the N-terminus, the 86-residue chain is V-type proton ATPase subunit e (86 aa).

A helical transmembrane segment spans residues 1-21 (MGILIPLVSVSAFWAIIGFGG). The Cytoplasmic segment spans residues 22-32 (PWIVPKGPNRG). The helical transmembrane segment at 33-53 (IIQLMIIMTAVCCWMFWIMVF) threads the bilayer. At 54–86 (LHQLNPLIGPQINVKTIRWISEKWGDAPNVINN) the chain is on the lumenal side.

Belongs to the V-ATPase e1/e2 subunit family. As to quaternary structure, V-ATPase is a heteromultimeric enzyme made up of two complexes: the ATP-hydrolytic V1 complex and the proton translocation V0 complex. The V1 complex consists of three catalytic AB heterodimers that form a heterohexamer, three peripheral stalks each consisting of EG heterodimers, one central rotor including subunits D and F, and the regulatory subunits C and H. The proton translocation complex V0 consists of the proton transport subunit a, a ring of proteolipid subunits c9c'', rotary subunit d, subunits e and f, and the accessory subunits vah-19/Ac45 and vah-20/PRR.

The protein resides in the apical cell membrane. Subunit of the V0 complex of vacuolar(H+)-ATPase (V-ATPase), a multisubunit enzyme composed of a peripheral complex (V1) that hydrolyzes ATP and a membrane integral complex (V0) that translocates protons. V-ATPase is responsible for acidifying and maintaining the pH of intracellular compartments and in some cell types, is targeted to the plasma membrane, where it is responsible for acidifying the extracellular environment. During embryonic development, the V-ATPase is required to repress fusion of epidermal cells probably by negatively regulating eff-1-mediated cell fusion. The protein is V-type proton ATPase subunit e of Caenorhabditis elegans.